Consider the following 531-residue polypeptide: Coiled-coil domain-containing protein 9 (531 aa).

The tract at residues glutamate 40–valine 531 is disordered. Residues arginine 59–lysine 72 are compositionally biased toward basic and acidic residues. A Phosphoserine modification is found at serine 80. Threonine 95 is modified (phosphothreonine). Arginine 107 carries the omega-N-methylarginine modification. Phosphoserine is present on serine 111. Residues arginine 121, arginine 128, and arginine 130 each carry the omega-N-methylarginine modification. Asymmetric dimethylarginine occurs at positions 131, 133, and 135. At serine 137 the chain carries Phosphoserine. 3 stretches are compositionally biased toward basic and acidic residues: residues isoleucine 148–valine 185, phenylalanine 194–arginine 217, and aspartate 227–glycine 241. The stretch at serine 149 to valine 185 forms a coiled coil. Serine 202 is subject to Phosphoserine. Residues serine 248 and serine 255 each carry the phosphoserine modification. Basic and acidic residues-rich tracts occupy residues glycine 258–leucine 279, tryptophan 289–phenylalanine 302, glutamate 311–alanine 320, and tyrosine 361–glutamate 372. Residues serine 376, serine 386, and serine 390 each carry the phosphoserine modification. Residues serine 386–proline 395 show a composition bias toward low complexity. Pro residues predominate over residues methionine 396 to histidine 406. A compositionally biased stretch (acidic residues) spans aspartate 411–proline 446. Serine 521 carries the post-translational modification Phosphoserine.

Probable component of the exon junction complex (EJC); the association is RNA-dependent.

In terms of biological role, probable component of the exon junction complex (EJC), a multiprotein complex that associates immediately upstream of the exon-exon junction on mRNAs and serves as a positional landmark for the intron exon structure of genes and directs post-transcriptional processes in the cytoplasm such as mRNA export, nonsense-mediated mRNA decay (NMD) or translation. The protein is Coiled-coil domain-containing protein 9 of Homo sapiens (Human).